We begin with the raw amino-acid sequence, 339 residues long: MLEQLPYLALKTPPKTTALLKAECADFIVKEHLGYEMSGDGEFVALYVRKTDCNTLFVGEKLAKFAGVSERNMGYAGLKDRRAVTEQWFCLQMPGMETPDFSQFELDGVEILTVTRHNRKIRTGSLEGNYFDILLRGAEESDELKVRLDFVANFGFPNYFTEQRFGREGHNLTQALRWAQGEIKVKDRKKRSFYLSAARSEIFNLVVAARIAKGATNQVLPNDIVQLAGSHSWFKADEKEDLTVLQVRLENQDILLTAPLIGEDILAASDIENEIVNQHSAFDSLMKQERMKAVRRPLLMKAKGFSWAFEPEGLRLKFYLPAGSYATALVRELVNYTEE.

Residue Asp-80 is the Nucleophile of the active site. The TRUD domain occupies 155–311 (GFPNYFTEQR…AKGFSWAFEP (157 aa)).

It belongs to the pseudouridine synthase TruD family.

It catalyses the reaction uridine(13) in tRNA = pseudouridine(13) in tRNA. In terms of biological role, responsible for synthesis of pseudouridine from uracil-13 in transfer RNAs. This is tRNA pseudouridine synthase D from Haemophilus influenzae (strain 86-028NP).